A 351-amino-acid polypeptide reads, in one-letter code: Large ribosomal subunit protein uL3 (351 aa).

2 disordered regions span residues 1 to 31 and 246 to 271; these read MGHR…TPRT and KGSR…GQLG.

It belongs to the universal ribosomal protein uL3 family. In terms of assembly, part of the 50S ribosomal subunit. Forms a cluster with proteins L14 and L24e.

In terms of biological role, one of the primary rRNA binding proteins, it binds directly near the 3'-end of the 23S rRNA, where it nucleates assembly of the 50S subunit. The sequence is that of Large ribosomal subunit protein uL3 from Saccharolobus islandicus (strain M.16.27) (Sulfolobus islandicus).